The sequence spans 399 residues: Elongation factor Tu (399 aa).

Positions 10–204 constitute a tr-type G domain; sequence KPHVNIGTIG…AVDASIPEPE (195 aa). The tract at residues 19-26 is G1; it reads GHVDHGKT. 19–26 lines the GTP pocket; sequence GHVDHGKT. Threonine 26 serves as a coordination point for Mg(2+). The tract at residues 60-64 is G2; that stretch reads GITIN. The segment at 81–84 is G3; sequence DCPG. GTP contacts are provided by residues 81-85 and 136-139; these read DCPGH and NKCD. The G4 stretch occupies residues 136–139; sequence NKCD. Residues 174 to 176 form a G5 region; that stretch reads SGL.

The protein belongs to the TRAFAC class translation factor GTPase superfamily. Classic translation factor GTPase family. EF-Tu/EF-1A subfamily. In terms of assembly, monomer.

It is found in the cytoplasm. The catalysed reaction is GTP + H2O = GDP + phosphate + H(+). In terms of biological role, GTP hydrolase that promotes the GTP-dependent binding of aminoacyl-tRNA to the A-site of ribosomes during protein biosynthesis. The polypeptide is Elongation factor Tu (Synechococcus sp. (strain CC9902)).